We begin with the raw amino-acid sequence, 108 residues long: Probable endonuclease 4 (108 aa).

Positions 2, 36, 49, 51, and 81 each coordinate Zn(2+).

This sequence belongs to the AP endonuclease 2 family. Zn(2+) is required as a cofactor.

It carries out the reaction Endonucleolytic cleavage to 5'-phosphooligonucleotide end-products.. Functionally, endonuclease IV plays a role in DNA repair. It cleaves phosphodiester bonds at apurinic or apyrimidinic (AP) sites, generating a 3'-hydroxyl group and a 5'-terminal sugar phosphate. This Thermotoga neapolitana protein is Probable endonuclease 4 (nfo).